A 227-amino-acid chain; its full sequence is AN1-type zinc finger protein 3 (227 aa).

The A20-type zinc-finger motif lies at 12-44 (PSLPPRCPCGFWGSSKTMNLCSKCFADFQKKQP). Zn(2+) contacts are provided by Cys-18, Cys-20, Cys-32, and Cys-35. Disordered regions lie at residues 41 to 99 (KKQP…TEEC) and 113 to 151 (PTKRSCGADSQSENEASPVKRPRLVENPERPEESGRSKQ). 2 stretches are compositionally biased toward low complexity: residues 49 to 59 (TPSTSNSQSDL) and 66 to 77 (SDNNNTSVTTPT). Polar residues-rich tracts occupy residues 78 to 96 (LSPSQQSLPTELNVTSPST) and 113 to 127 (PTKRSCGADSQSENE). Positions 135–148 (RLVENPERPEESGR) are enriched in basic and acidic residues. The segment at 151–200 (QKSRRRCFQCQTKLELVQQELGSCRCGYVFCMLHRLPEQHDCTFDHMGRG) adopts an AN1-type zinc-finger fold. Positions 157, 160, 174, 176, 181, 184, 190, and 192 each coordinate Zn(2+).

In terms of tissue distribution, expressed in testis.

This chain is AN1-type zinc finger protein 3 (Zfand3), found in Mus musculus (Mouse).